The sequence spans 264 residues: MQKASHKNKKERGVSNKVKTSVHNLSKTQQTKLTVGSLGLGLIIIQHGPYLQITHLIRKGAAANDGKLQPGDVLISVGHANVLGYTLREFLQLLQHITIGTVLQIKVYRDFINIPEEWQEIYDLIPEAKFPVTSTPKKIELAKDESFTSSDDNENVDLDKRLQYYRYPWSTVHHPARRPISISRDWHGYKKKNHTISVGKDINCDVMIHRDDKKEVRAPSPYWIMVKQDNESSSSSTSSTSDAFWLEDCAQVEEGKAQLVSKVG.

Residues 30-109 (QTKLTVGSLG…GTVLQIKVYR (80 aa)) enclose the PDZ domain.

This Homo sapiens (Human) protein is PDZ domain-containing protein 9 (PDZD9).